The chain runs to 1035 residues: Sulfite reductase [NADPH] flavoprotein component (1035 aa).

One can recognise an FAD-binding FR-type domain in the interval 648 to 879 (VKNFVVKVKE…VKPSVMKLPP (232 aa)). FAD is bound by residues 684–695 (YDIGEALGIHAR) and 814–824 (LKRREYSIASS).

It depends on FAD as a cofactor. FMN is required as a cofactor.

It catalyses the reaction hydrogen sulfide + 3 NADP(+) + 3 H2O = sulfite + 3 NADPH + 4 H(+). It functions in the pathway sulfur metabolism; hydrogen sulfide biosynthesis; hydrogen sulfide from sulfite (NADPH route): step 1/1. Its function is as follows. This enzyme catalyzes the 6-electron reduction of sulfite to sulfide. This is one of several activities required for the biosynthesis of L-cysteine from sulfate. This is Sulfite reductase [NADPH] flavoprotein component (MET10) from Saccharomyces cerevisiae (strain ATCC 204508 / S288c) (Baker's yeast).